The sequence spans 257 residues: uncharacterized protein (257 aa).

Residues 6–26 (IFWLNLAAIIIISIVVSGGMF) form a helical membrane-spanning segment.

Belongs to the staphylococcal tandem lipoprotein family.

It is found in the cell membrane. This is an uncharacterized protein from Staphylococcus aureus (strain Mu50 / ATCC 700699).